The primary structure comprises 156 residues: ATP synthase subunit b (156 aa).

A helical transmembrane segment spans residues 7-29 (LLGQAISFLLFVWFCMKFVWPPL).

The protein belongs to the ATPase B chain family. In terms of assembly, F-type ATPases have 2 components, F(1) - the catalytic core - and F(0) - the membrane proton channel. F(1) has five subunits: alpha(3), beta(3), gamma(1), delta(1), epsilon(1). F(0) has three main subunits: a(1), b(2) and c(10-14). The alpha and beta chains form an alternating ring which encloses part of the gamma chain. F(1) is attached to F(0) by a central stalk formed by the gamma and epsilon chains, while a peripheral stalk is formed by the delta and b chains.

The protein resides in the cell inner membrane. Functionally, f(1)F(0) ATP synthase produces ATP from ADP in the presence of a proton or sodium gradient. F-type ATPases consist of two structural domains, F(1) containing the extramembraneous catalytic core and F(0) containing the membrane proton channel, linked together by a central stalk and a peripheral stalk. During catalysis, ATP synthesis in the catalytic domain of F(1) is coupled via a rotary mechanism of the central stalk subunits to proton translocation. In terms of biological role, component of the F(0) channel, it forms part of the peripheral stalk, linking F(1) to F(0). The sequence is that of ATP synthase subunit b from Shewanella pealeana (strain ATCC 700345 / ANG-SQ1).